Here is a 230-residue protein sequence, read N- to C-terminus: Type 4 apparatus protein DotY (230 aa).

A disordered region spans residues 202 to 230 (EPKALETKREEIRQEIESGAEAPTTQSIR). A compositionally biased stretch (basic and acidic residues) spans 204 to 217 (KALETKREEIRQEI).

The T4BSS is a complex nanomachine composed of several subcomplexes. This subunit is part of the Type IV Coupling Complex (T4CC), a subcomplex composed of the DotLMNYZ core and the IcmSW-LvgA adapter subunits, linked by the C-terminal tail of DotL. Six DotLMNYZ hetero-pentameric units may assemble into a hexameric nanomachine, forming an inner membrane channel for effectors to pass through. Interacts exclusively with DotZ. DotY and DotZ are co-dependent for the assembly into the T4CC.

It is found in the cytoplasm. Its function is as follows. Component of the Dot/Icm type IVB secretion system (T4BSS), which is used to inject bacterial effector proteins into eukaryotic host cells. Part of a subcomplex which recruits effector proteins and delivers them to the core transmembrane subcomplex. DotY and DotZ play a role in effector translocation, but are not essential and do not influence the stability of the subcomplex main components. The DotY/DotZ main function is to optimize secretion by modulating the delivery trajectory of the IcmSW module and the localization of the machinery to the poles. The chain is Type 4 apparatus protein DotY from Legionella pneumophila subsp. pneumophila (strain Philadelphia 1 / ATCC 33152 / DSM 7513).